A 490-amino-acid chain; its full sequence is Cobyric acid synthase (490 aa).

The GATase cobBQ-type domain occupies Q250 to W432. The active-site Nucleophile is C328. H424 is an active-site residue.

This sequence belongs to the CobB/CobQ family. CobQ subfamily.

The protein operates within cofactor biosynthesis; adenosylcobalamin biosynthesis. In terms of biological role, catalyzes amidations at positions B, D, E, and G on adenosylcobyrinic A,C-diamide. NH(2) groups are provided by glutamine, and one molecule of ATP is hydrogenolyzed for each amidation. This is Cobyric acid synthase from Gloeobacter violaceus (strain ATCC 29082 / PCC 7421).